The sequence spans 887 residues: MINTSPLLNYVSSHHDIKAINQWRTDVEKQLQDSYENGQSIREIIKARSDLVDEALVFLWKHAELDQSKLGLFAVGGYGRREMLPYSDVDIMILSEDEISEENEKRISTFISSLWDVGNFKPGISVRTIQSCVEQAATDLTVATTLIEARLITGNTQLAKWPRRIVSQTWTDKTFYDAKMAEQAKRYHQHNNTESNLEPDIKNAPGGIRDINQIGWIAKRHFRVNRIYDLVHLGFISEFELAVLEEAESFLWEIRHHLHRLAKRDENRLLFDHQREIAAKFGYVRQEGQPVNYGVEQFMKRYYRTAQQVSTLNEMLLAYFSESVITPRLPNYERKIEVVNDHFKIVDNKLAVQHHKIFAEHPSAILELFYILANRPDIEGIRARTLRLLILAAKRINQSYRDNPEHQALFMSIIRSPYRLYDTLVAMKRYGVLGNYIPAFAQIMGLMQYDLFHIYTVDAHTLLLLRNLNRFREPEFAKEFPVVSSVFQRLARQDIVFIAALFHDIAKGRGGDHSELGAEDAIEFGRAHGFTERECKLIAWLIQNHLLMSLTAQKKDISDPDVVKDFAEKLGDMEHLDYLYTLTVADINATNPKLWNTWRASLMRQLYTHARDVIRTGLGRPVDYQMLIEDTKFAASELLVNNFALADVEKVWQELGDEYFIKESADEIAWHTQAILKHGDNPEPLVLLRAHRKAAQDAVQIFIYTRDQPNLFATTVAVLDRMNLDVQDAKIITASTAFSLDTYVVLDRFGTLLTDPEREETVKNALVKALSQPDQYPGLMQRRIPRQLRHFDIENTVDVTLNEALQQNMVEISTLDHPGLLARVGGLFMMQGLDIHSARIATLGERAEDIFFVTKKDGKPLNNEEVKLFSEKLKAALDEASNQICQH.

Residues Met-1–Glu-337 form a uridylyltransferase region. The interval Val-339–Val-699 is uridylyl-removing. Residues Val-457–Leu-579 form the HD domain. ACT domains lie at Gln-700 to Arg-782 and Met-809 to His-887.

It belongs to the GlnD family. The cofactor is Mg(2+).

It catalyses the reaction [protein-PII]-L-tyrosine + UTP = [protein-PII]-uridylyl-L-tyrosine + diphosphate. The enzyme catalyses [protein-PII]-uridylyl-L-tyrosine + H2O = [protein-PII]-L-tyrosine + UMP + H(+). Uridylyltransferase (UTase) activity is inhibited by glutamine, while glutamine activates uridylyl-removing (UR) activity. Modifies, by uridylylation and deuridylylation, the PII regulatory proteins (GlnB and homologs), in response to the nitrogen status of the cell that GlnD senses through the glutamine level. Under low glutamine levels, catalyzes the conversion of the PII proteins and UTP to PII-UMP and PPi, while under higher glutamine levels, GlnD hydrolyzes PII-UMP to PII and UMP (deuridylylation). Thus, controls uridylylation state and activity of the PII proteins, and plays an important role in the regulation of nitrogen assimilation and metabolism. The chain is Bifunctional uridylyltransferase/uridylyl-removing enzyme from Acinetobacter baumannii (strain ACICU).